Here is a 66-residue protein sequence, read N- to C-terminus: Stress-induced protein KIN2 (66 aa).

Residues 1 to 10 are compositionally biased toward polar residues; the sequence is MSETNKNAFQ. Residues 1 to 20 are disordered; sequence MSETNKNAFQAGQAAGKAEE. 2 repeats span residues 31–35 and 49–53; these read DAAAA and DAAVG.

Interacts with DEK3. As to expression, expressed at high levels in embryos and mature seeds.

This is Stress-induced protein KIN2 from Arabidopsis thaliana (Mouse-ear cress).